The following is a 154-amino-acid chain: Large ribosomal subunit protein uL13 (154 aa).

The protein belongs to the universal ribosomal protein uL13 family. In terms of assembly, part of the 50S ribosomal subunit.

Its function is as follows. This protein is one of the early assembly proteins of the 50S ribosomal subunit, although it is not seen to bind rRNA by itself. It is important during the early stages of 50S assembly. This chain is Large ribosomal subunit protein uL13, found in Cereibacter sphaeroides (strain ATCC 17025 / ATH 2.4.3) (Rhodobacter sphaeroides).